A 100-amino-acid chain; its full sequence is Flagellar transcriptional regulator FlhD (100 aa).

Belongs to the FlhD family. Homodimer; disulfide-linked. Forms a heterohexamer composed of two FlhC and four FlhD subunits. Each FlhC binds a FlhD dimer, forming a heterotrimer, and a hexamer assembles by dimerization of two heterotrimers.

It localises to the cytoplasm. Functionally, functions in complex with FlhC as a master transcriptional regulator that regulates transcription of several flagellar and non-flagellar operons by binding to their promoter region. Activates expression of class 2 flagellar genes, including fliA, which is a flagellum-specific sigma factor that turns on the class 3 genes. Also regulates genes whose products function in a variety of physiological pathways. In Ralstonia pickettii (strain 12D), this protein is Flagellar transcriptional regulator FlhD.